The primary structure comprises 566 residues: Phenylalanine--tRNA ligase beta subunit (566 aa).

Residues tyrosine 287–proline 362 enclose the B5 domain. The Mg(2+) site is built by aspartate 340, aspartate 346, glutamate 349, and aspartate 350.

Belongs to the phenylalanyl-tRNA synthetase beta subunit family. Type 2 subfamily. As to quaternary structure, tetramer of two alpha and two beta subunits. The cofactor is Mg(2+).

The protein localises to the cytoplasm. It catalyses the reaction tRNA(Phe) + L-phenylalanine + ATP = L-phenylalanyl-tRNA(Phe) + AMP + diphosphate + H(+). The polypeptide is Phenylalanine--tRNA ligase beta subunit (Borreliella burgdorferi (strain ATCC 35210 / DSM 4680 / CIP 102532 / B31) (Borrelia burgdorferi)).